A 304-amino-acid polypeptide reads, in one-letter code: Probable intron-encoded endonuclease 1 (304 aa).

The region spanning 84-175 (DKGGIYSFIN…RFNFDNLYNF (92 aa)) is the GIY-YIG domain.

To endonucleases of group I introns of fungi and phage.

It is found in the mitochondrion. In terms of biological role, mitochondrial DNA endonuclease involved in intron homing. This Neurospora crassa (strain ATCC 24698 / 74-OR23-1A / CBS 708.71 / DSM 1257 / FGSC 987) protein is Probable intron-encoded endonuclease 1.